The primary structure comprises 82 residues: Turripeptide Gsp9.2 (82 aa).

The N-terminal stretch at 1–23 is a signal peptide; sequence MMAKLMITVMMVLLLSLQQGADG. Residues 24-46 constitute a propeptide that is removed on maturation; sequence RSERWRKNQMAASSIMRNLITAR. P49 and P50 each carry 4-hydroxyproline. 3 disulfides stabilise this stretch: C53-C68, C58-C72, and C64-C79. E56 carries the 4-carboxyglutamate modification.

It belongs to the Pg turripeptide superfamily. Expressed by the venom duct.

Its subcellular location is the secreted. The polypeptide is Turripeptide Gsp9.2 (Gemmula speciosa (Splendid gem-turris)).